Here is a 192-residue protein sequence, read N- to C-terminus: Large ribosomal subunit protein bL9 (192 aa).

The disordered stretch occupies residues 172–192 (DALRPEDFFDPEADGVDEDEA). The segment covering 179–192 (FFDPEADGVDEDEA) has biased composition (acidic residues).

Belongs to the bacterial ribosomal protein bL9 family.

In terms of biological role, binds to the 23S rRNA. This is Large ribosomal subunit protein bL9 from Rhizobium johnstonii (strain DSM 114642 / LMG 32736 / 3841) (Rhizobium leguminosarum bv. viciae).